The following is a 662-amino-acid chain: 72 kDa type IV collagenase (662 aa).

Residues 1-29 (MEALGARGALAGFLRALCVLGCLLGRATA) form the signal peptide. Positions 30 to 109 (PPSPVIKFPG…PRCGNPDVAN (80 aa)) are cleaved as a propeptide — activation peptide. The Cysteine switch motif lies at 100–107 (PRCGNPDV). A Zn(2+)-binding site is contributed by Cys102. Positions 110-221 (YNFFPRKPKW…LWTLGEGQVV (112 aa)) are collagenase-like 1. Positions 134 and 168 each coordinate Ca(2+). Residues His178 and Asp180 each coordinate Zn(2+). The Ca(2+) site is built by Asp185 and Gly186. His193 serves as a coordination point for Zn(2+). Ca(2+)-binding residues include Gly200, Gly202, and Asp204. Residue His206 coordinates Zn(2+). Ca(2+) is bound by residues Asp208, Asp209, and Glu211. The collagen-binding stretch occupies residues 222–396 (RVKYGNADGE…WGFCPDQGYS (175 aa)). Fibronectin type-II domains lie at 228-276 (ADGE…FCPH), 286-334 (ADGQ…FCPE), and 344-392 (SEGA…FCPD). Intrachain disulfides connect Cys233/Cys259, Cys247/Cys274, Cys291/Cys317, Cys305/Cys332, Cys349/Cys375, and Cys363/Cys390. A collagenase-like 2 region spans residues 397 to 467 (LFLVAAHEFG…GPTPTLGPVT (71 aa)). His403 is a binding site for Zn(2+). Glu404 is an active-site residue. Residues His407 and His413 each coordinate Zn(2+). The tract at residues 414 to 662 (SQDPGALMAP…GSIKTDWLGC (249 aa)) is required for inhibitor TIMP2 binding. Cysteines 471 and 662 form a disulfide. 4 Hemopexin repeats span residues 474–518 (DIVF…WPEL), 519–565 (PEKI…GLPP), 567–615 (VQRV…WNAI), and 616–662 (PDHL…WLGC). Ca(2+)-binding residues include Asp478, Asp523, and Asp571. Residue Asn575 is glycosylated (N-linked (GlcNAc...) asparagine). Ca(2+) is bound at residue Asp620. A glycan (N-linked (GlcNAc...) asparagine) is linked at Asn644.

The protein belongs to the peptidase M10A family. Interacts (via the C-terminal hemopexin-like domains-containing region) with the integrin alpha-V/beta-3; the interaction promotes vascular invasion in angiogenic vessels and melamoma cells. Interacts (via the C-terminal PEX domain) with TIMP2 (via the C-terminal); the interaction inhibits the degradation activity. Interacts with GSK3B. Requires Ca(2+) as cofactor. The cofactor is Zn(2+). In terms of processing, phosphorylation on multiple sites modulates enzymatic activity. Phosphorylated by PKC in vitro. The propeptide is processed by MMP14 (MT-MMP1) and MMP16 (MT-MMP3). Autocatalytic cleavage in the C-terminal produces the anti-angiogenic peptide, PEX. This processing appears to be facilitated by binding integrinv/beta3.

It is found in the secreted. The protein localises to the extracellular space. The protein resides in the extracellular matrix. It localises to the membrane. Its subcellular location is the nucleus. It carries out the reaction Cleavage of gelatin type I and collagen types IV, V, VII, X. Cleaves the collagen-like sequence Pro-Gln-Gly-|-Ile-Ala-Gly-Gln.. Its function is as follows. Ubiquitinous metalloproteinase that is involved in diverse functions such as remodeling of the vasculature, angiogenesis, tissue repair, tumor invasion, inflammation, and atherosclerotic plaque rupture. As well as degrading extracellular matrix proteins, can also act on several nonmatrix proteins such as big endothelial 1 and beta-type CGRP promoting vasoconstriction. Also cleaves KISS at a Gly-|-Leu bond. Appears to have a role in myocardial cell death pathways. Contributes to myocardial oxidative stress by regulating the activity of GSK3beta. Cleaves GSK3beta in vitro. Involved in the formation of the fibrovascular tissues. Functionally, PEX, the C-terminal non-catalytic fragment of MMP2, possesses anti-angiogenic and anti-tumor properties and inhibits cell migration and cell adhesion to FGF2 and vitronectin. Ligand for integrin alpha-v/beta-3 on the surface of blood vessels. The polypeptide is 72 kDa type IV collagenase (MMP2) (Oryctolagus cuniculus (Rabbit)).